Reading from the N-terminus, the 57-residue chain is Conotoxin reg3.17 (57 aa).

The N-terminal stretch at 1 to 16 is a signal peptide; that stretch reads TICLLLFPLTVVPLDG. Residues 17-44 constitute a propeptide that is removed on maturation; the sequence is DQPAHQPAVRKHNIKSAVQLRQWDEEQQ. 3 cysteine pairs are disulfide-bonded: Cys45–Cys57, Cys46–Cys53, and Cys50–Cys56.

It belongs to the conotoxin M superfamily. In terms of tissue distribution, expressed by the venom duct.

It localises to the secreted. This is Conotoxin reg3.17 from Conus regius (Crown cone).